Consider the following 369-residue polypeptide: tRNA 2-selenouridine synthase (369 aa).

The 125-residue stretch at 12–136 folds into the Rhodanese domain; the sequence is FLEDTPLMDV…LRNFLFETTR (125 aa). The active-site S-selanylcysteine intermediate is C95.

Belongs to the SelU family. Monomer.

It carries out the reaction 5-methylaminomethyl-2-thiouridine(34) in tRNA + selenophosphate + (2E)-geranyl diphosphate + H2O + H(+) = 5-methylaminomethyl-2-selenouridine(34) in tRNA + (2E)-thiogeraniol + phosphate + diphosphate. It catalyses the reaction 5-methylaminomethyl-2-thiouridine(34) in tRNA + (2E)-geranyl diphosphate = 5-methylaminomethyl-S-(2E)-geranyl-thiouridine(34) in tRNA + diphosphate. The catalysed reaction is 5-methylaminomethyl-S-(2E)-geranyl-thiouridine(34) in tRNA + selenophosphate + H(+) = 5-methylaminomethyl-2-(Se-phospho)selenouridine(34) in tRNA + (2E)-thiogeraniol. The enzyme catalyses 5-methylaminomethyl-2-(Se-phospho)selenouridine(34) in tRNA + H2O = 5-methylaminomethyl-2-selenouridine(34) in tRNA + phosphate. Functionally, involved in the post-transcriptional modification of the uridine at the wobble position (U34) of tRNA(Lys), tRNA(Glu) and tRNA(Gln). Catalyzes the conversion of 2-thiouridine (S2U-RNA) to 2-selenouridine (Se2U-RNA). Acts in a two-step process involving geranylation of 2-thiouridine (S2U) to S-geranyl-2-thiouridine (geS2U) and subsequent selenation of the latter derivative to 2-selenouridine (Se2U) in the tRNA chain. The protein is tRNA 2-selenouridine synthase of Pseudomonas paraeruginosa (strain DSM 24068 / PA7) (Pseudomonas aeruginosa (strain PA7)).